A 357-amino-acid chain; its full sequence is EGF-like domain-containing protein 2 (357 aa).

The N-terminal stretch at 1–20 (MPPSLSHLFLLSTFASLALC) is a signal peptide. 2 EGF-like domains span residues 21–55 (SFYC…FNCG) and 61–93 (ISAA…PTCQ). Intrachain disulfides connect Cys-24/Cys-37, Cys-31/Cys-43, Cys-45/Cys-54, Cys-65/Cys-75, Cys-69/Cys-81, and Cys-83/Cys-92.

In terms of tissue distribution, prismatic layer of shell (at protein level). Expressed primarily in the mantle with highest level in the mantle edge and lower level in the mantle pallium.

The protein localises to the secreted. The chain is EGF-like domain-containing protein 2 from Pinctada maxima (Silver-lipped pearl oyster).